The primary structure comprises 544 residues: CTP synthase (544 aa).

The interval 1-265 (MTKFIFVTGG…DDIICEHLDL (265 aa)) is amidoligase domain. Serine 13 contacts CTP. Position 13 (serine 13) interacts with UTP. Residues 14–19 (SLGKGI) and aspartate 71 contribute to the ATP site. The Mg(2+) site is built by aspartate 71 and glutamate 139. CTP-binding positions include 146–148 (DIE), 186–191 (KTKPTQ), and lysine 222. UTP-binding positions include 186-191 (KTKPTQ) and lysine 222. In terms of domain architecture, Glutamine amidotransferase type-1 spans 290–542 (NIAMVGKYVD…VEAALAYQAD (253 aa)). An L-glutamine-binding site is contributed by glycine 351. Cysteine 378 (nucleophile; for glutamine hydrolysis) is an active-site residue. L-glutamine is bound by residues 379–382 (LGMQ), glutamate 402, and arginine 469. Active-site residues include histidine 515 and glutamate 517.

This sequence belongs to the CTP synthase family. In terms of assembly, homotetramer.

It catalyses the reaction UTP + L-glutamine + ATP + H2O = CTP + L-glutamate + ADP + phosphate + 2 H(+). It carries out the reaction L-glutamine + H2O = L-glutamate + NH4(+). The catalysed reaction is UTP + NH4(+) + ATP = CTP + ADP + phosphate + 2 H(+). The protein operates within pyrimidine metabolism; CTP biosynthesis via de novo pathway; CTP from UDP: step 2/2. Its activity is regulated as follows. Allosterically activated by GTP, when glutamine is the substrate; GTP has no effect on the reaction when ammonia is the substrate. The allosteric effector GTP functions by stabilizing the protein conformation that binds the tetrahedral intermediate(s) formed during glutamine hydrolysis. Inhibited by the product CTP, via allosteric rather than competitive inhibition. Functionally, catalyzes the ATP-dependent amination of UTP to CTP with either L-glutamine or ammonia as the source of nitrogen. Regulates intracellular CTP levels through interactions with the four ribonucleotide triphosphates. The chain is CTP synthase from Laribacter hongkongensis (strain HLHK9).